The sequence spans 464 residues: Cysteine--tRNA ligase (464 aa).

Position 27 (C27) interacts with Zn(2+). The 'HIGH' region motif lies at 29–39 (PTVYNFFHIGN). The Zn(2+) site is built by C207, H232, and E236. A 'KMSKS' region motif is present at residues 264-268 (KMSKS). K267 serves as a coordination point for ATP.

The protein belongs to the class-I aminoacyl-tRNA synthetase family. Monomer. Zn(2+) is required as a cofactor.

It localises to the cytoplasm. The enzyme catalyses tRNA(Cys) + L-cysteine + ATP = L-cysteinyl-tRNA(Cys) + AMP + diphosphate. The chain is Cysteine--tRNA ligase from Clostridium acetobutylicum (strain ATCC 824 / DSM 792 / JCM 1419 / IAM 19013 / LMG 5710 / NBRC 13948 / NRRL B-527 / VKM B-1787 / 2291 / W).